Reading from the N-terminus, the 505-residue chain is Aspartyl/glutamyl-tRNA(Asn/Gln) amidotransferase subunit B (505 aa).

The protein belongs to the GatB/GatE family. GatB subfamily. Heterotrimer of A, B and C subunits.

It carries out the reaction L-glutamyl-tRNA(Gln) + L-glutamine + ATP + H2O = L-glutaminyl-tRNA(Gln) + L-glutamate + ADP + phosphate + H(+). The catalysed reaction is L-aspartyl-tRNA(Asn) + L-glutamine + ATP + H2O = L-asparaginyl-tRNA(Asn) + L-glutamate + ADP + phosphate + 2 H(+). Functionally, allows the formation of correctly charged Asn-tRNA(Asn) or Gln-tRNA(Gln) through the transamidation of misacylated Asp-tRNA(Asn) or Glu-tRNA(Gln) in organisms which lack either or both of asparaginyl-tRNA or glutaminyl-tRNA synthetases. The reaction takes place in the presence of glutamine and ATP through an activated phospho-Asp-tRNA(Asn) or phospho-Glu-tRNA(Gln). The chain is Aspartyl/glutamyl-tRNA(Asn/Gln) amidotransferase subunit B from Kineococcus radiotolerans (strain ATCC BAA-149 / DSM 14245 / SRS30216).